The following is a 538-amino-acid chain: Phosphoenolpyruvate carboxykinase (ATP) (538 aa).

Substrate is bound by residues Arg-64, Tyr-205, and Lys-211. ATP-binding positions include Lys-211, His-230, and 246–254; that span reads GLSGTGKTT. Residues Lys-211 and His-230 each coordinate Mn(2+). Position 267 (Asp-267) interacts with Mn(2+). Residues Glu-295, Arg-331, 447–448, and Thr-453 each bind ATP; that span reads RI. Arg-331 contributes to the substrate binding site.

Belongs to the phosphoenolpyruvate carboxykinase (ATP) family. As to quaternary structure, monomer. The cofactor is Mn(2+).

The protein resides in the cytoplasm. The enzyme catalyses oxaloacetate + ATP = phosphoenolpyruvate + ADP + CO2. The protein operates within carbohydrate biosynthesis; gluconeogenesis. Its function is as follows. Involved in the gluconeogenesis. Catalyzes the conversion of oxaloacetate (OAA) to phosphoenolpyruvate (PEP) through direct phosphoryl transfer between the nucleoside triphosphate and OAA. The sequence is that of Phosphoenolpyruvate carboxykinase (ATP) from Haemophilus influenzae (strain 86-028NP).